We begin with the raw amino-acid sequence, 590 residues long: Phosphate-repressible phosphate permease pho-4 (590 aa).

A run of 8 helical transmembrane segments spans residues 6 to 26, 44 to 64, 85 to 105, 118 to 138, 149 to 169, 186 to 206, 220 to 240, and 246 to 266; these read FDYLLAIGTIFAALDAWNIGA, YLQAMILGSIMEFAGSVGVGA, ALLMLGMVCAVVASSIYLTMA, IMGGVIGMGIAAVGADGVQWV, VFLAWVIAPGLAGAFASIIFL, FVMVPIYFGITAALLCMLLLW, IAGTIIGVGAAWALLVTIFLM, and IVILEDWQLRFWHIPLGPLLL. The Cytoplasmic segment spans residues 267 to 466; it reads RRGEVPPPPA…GALPEKGKAD (200 aa). A disordered region spans residues 297–361; the sequence is ARRAAQNGDS…PQIKTMVGPR (65 aa). Residues 313–322 show a composition bias toward polar residues; the sequence is VTSSTSNPSA. A compositionally biased stretch (basic and acidic residues) spans 325–345; that stretch reads DGEKGATITKDDSSYSHDHSE. 4 helical membrane passes run 467-487, 506-525, 527-547, and 561-581; these read VPVWILVFGASCLVIGLWTYG, GFSMELGSAVTVILATRLKL, VSTTQCITGATVGVGLCSGTW, and GWFITLPVAGIISGCLMGIII.

This sequence belongs to the inorganic phosphate transporter (PiT) (TC 2.A.20) family.

Its subcellular location is the cell membrane. Its activity is regulated as follows. Phosphate transport activity is competitively inhibited by vanadate and arsenate. Functionally, high-affinity transporter for external inorganic phosphate. Acts probably as a sodium-phosphate symporter. Component of the high affinity phosphate transport system II (ptsII) necessary for scavenging phosphorus from the environment under conditions of limiting phosphorus. The chain is Phosphate-repressible phosphate permease pho-4 from Neurospora crassa (strain ATCC 24698 / 74-OR23-1A / CBS 708.71 / DSM 1257 / FGSC 987).